Consider the following 400-residue polypeptide: Lysophospholipid transporter LplT (400 aa).

12 consecutive transmembrane segments (helical) span residues 19–39 (VIVA…ATLA), 53–73 (VLQM…GQIA), 91–111 (AGAA…LVGI), 139–159 (LMEA…GVLA), 164–184 (IAAL…NLFI), 195–213 (SWRL…VVLW), 227–247 (LFWG…PVAL), 257–277 (YLNA…AKLV), 281–301 (TVSR…IFSL), 304–324 (ALLP…FFVV), 352–372 (NSAM…GVPA), and 373–393 (VAIG…LWIW).

It belongs to the major facilitator superfamily. LplT (TC 2.A.1.42) family.

Its subcellular location is the cell inner membrane. Catalyzes the facilitated diffusion of 2-acyl-glycero-3-phosphoethanolamine (2-acyl-GPE) into the cell. The sequence is that of Lysophospholipid transporter LplT from Salmonella schwarzengrund (strain CVM19633).